Here is a 577-residue protein sequence, read N- to C-terminus: Zinc finger protein 384 (577 aa).

Residues 171–225 form a disordered region; that stretch reads TLTEEGGGGGGGGGSVAPKPPRGRKKKRMLESGLPEMNDPYVLSPEDDDDHQKDG. Positions 175–185 are enriched in gly residues; it reads EGGGGGGGGGS. Ser-214 bears the Phosphoserine mark. C2H2-type zinc fingers lie at residues 228-250, 256-278, 284-306, 317-339, 345-367, 373-397, 403-425, and 433-455; these read YRCR…SKSH, HKCP…IRIH, YSCN…TRIH, HKCP…LRIH, YNCS…TRIH, YKCA…RRQH, FKCH…LSTH, and YTCT…MRKH. Low complexity predominate over residues 501 to 515; that stretch reads QQQQQQQQQQQQQQQ. Positions 501–550 are disordered; sequence QQQQQQQQQQQQQQQQPPPHFQSPGAAPQGGGGGDSNPNPPPQCSFDLTP.

It belongs to the krueppel C2H2-type zinc-finger protein family. In terms of assembly, interacts with BCAR1.

It is found in the nucleus. Transcription factor that binds the consensus DNA sequence [GC]AAAAA. Seems to bind and regulate the promoters of MMP1, MMP3, MMP7 and COL1A1. The polypeptide is Zinc finger protein 384 (ZNF384) (Homo sapiens (Human)).